The sequence spans 300 residues: MSIDLSKLLTERRNANSANIDTLSTVDMLTVINQEDQQVAQAITPYLPQIAEVVDKVAAALRAGGRLIYIGAGTSGRLGILDASECPPTFGTRPEQVVGIIAGGHKAILSAVENVEDNKAQGAMDLQNLNFSNRDVLVGLAASGRTPYVIGAMEYAHSQNAFVAIVSCNPHGEMAQLADVAITPVVGPEVVTGSTRLKAGTAQKLVLNMISTGAMIRIGKVYSNLMVDVEATNAKLIERQVSIVMEATDCDRATAQNALDACGRHCKTAIVMVLADLSAAEAQSLLAKNNGYIRKALSNT.

The SIS domain maps to 57 to 220 (VAAALRAGGR…STGAMIRIGK (164 aa)). Glu85 functions as the Proton donor in the catalytic mechanism. Glu116 is an active-site residue.

It belongs to the GCKR-like family. MurNAc-6-P etherase subfamily. Homodimer.

The catalysed reaction is N-acetyl-D-muramate 6-phosphate + H2O = N-acetyl-D-glucosamine 6-phosphate + (R)-lactate. It functions in the pathway amino-sugar metabolism; 1,6-anhydro-N-acetylmuramate degradation. It participates in amino-sugar metabolism; N-acetylmuramate degradation. The protein operates within cell wall biogenesis; peptidoglycan recycling. Functionally, specifically catalyzes the cleavage of the D-lactyl ether substituent of MurNAc 6-phosphate, producing GlcNAc 6-phosphate and D-lactate. Together with AnmK, is also required for the utilization of anhydro-N-acetylmuramic acid (anhMurNAc) either imported from the medium or derived from its own cell wall murein, and thus plays a role in cell wall recycling. The protein is N-acetylmuramic acid 6-phosphate etherase of Klebsiella aerogenes (Enterobacter aerogenes).